The primary structure comprises 299 residues: Glycine--tRNA ligase alpha subunit (299 aa).

This sequence belongs to the class-II aminoacyl-tRNA synthetase family. In terms of assembly, tetramer of two alpha and two beta subunits.

The protein localises to the cytoplasm. The catalysed reaction is tRNA(Gly) + glycine + ATP = glycyl-tRNA(Gly) + AMP + diphosphate. In Lactiplantibacillus plantarum (strain ATCC BAA-793 / NCIMB 8826 / WCFS1) (Lactobacillus plantarum), this protein is Glycine--tRNA ligase alpha subunit.